Here is a 364-residue protein sequence, read N- to C-terminus: Peptide chain release factor 2 (364 aa).

Q251 bears the N5-methylglutamine mark.

It belongs to the prokaryotic/mitochondrial release factor family. Post-translationally, methylated by PrmC. Methylation increases the termination efficiency of RF2.

The protein resides in the cytoplasm. In terms of biological role, peptide chain release factor 2 directs the termination of translation in response to the peptide chain termination codons UGA and UAA. This is Peptide chain release factor 2 (prfB) from Buchnera aphidicola subsp. Schizaphis graminum (strain Sg).